A 56-amino-acid chain; its full sequence is MTKKIKCAYHLCKKDVEESKAIERMLHFMHGILSKDEPRKYCSEACAEKDQMAHEL.

This is an uncharacterized protein from Escherichia coli (strain K12).